Here is a 1077-residue protein sequence, read N- to C-terminus: Receptor-like protein 1 (1077 aa).

An N-terminal signal peptide occupies residues M1 to C38. The N-cap stretch occupies residues V39–L120. Residues V39 to M1024 lie on the Extracellular side of the membrane. N-linked (GlcNAc...) asparagine glycosylation is found at N117, N131, and N139. LRR repeat units lie at residues F124–F147, L153–A176, A177–N201, M202–D225, R227–T250, A251–S274, L275–D299, L300–I324, T326–I348, L351–H376, R378–G397, and P399–Q424. N201 carries N-linked (GlcNAc...) asparagine glycosylation. A glycan (N-linked (GlcNAc...) asparagine) is linked at N240. N-linked (GlcNAc...) asparagine glycosylation occurs at N289. N-linked (GlcNAc...) asparagine glycosylation is found at N373, N390, and N423. Residues T425–P449 form an LRR 13; degenerate repeat. LRR repeat units lie at residues L450 to H473, Q474 to N498, N499 to H522, L524 to V545, F546 to M570, S572 to G594, C595 to G621, V623 to S643, K644 to R666, I667 to E694, M696 to F713, P714 to A737, G739 to T761, S762 to L785, S786 to K808, L877 to L901, Q902 to L925, G927 to L949, and S951 to G970. 2 N-linked (GlcNAc...) asparagine glycosylation sites follow: N460 and N498. Residue N553 is glycosylated (N-linked (GlcNAc...) asparagine). Residues N618, N631, and N645 are each glycosylated (N-linked (GlcNAc...) asparagine). N749 and N771 each carry an N-linked (GlcNAc...) asparagine glycan. The N-linked (GlcNAc...) asparagine glycan is linked to N908. Residues N956 and N961 are each glycosylated (N-linked (GlcNAc...) asparagine). Residues H971–M1024 are C-cap/acidic domain. Residues V1025–F1045 traverse the membrane as a helical segment. Residues L1046–N1077 are Cytoplasmic-facing.

The protein belongs to the RLP family.

Its subcellular location is the cell membrane. Involved in plant defense. Confers resistance to the bacterial pathogen Xanthomonas through recognition of the microbe-associated molecular pattern (MAMP) eMax. Functionality seems to depend on the presence of the receptor kinase SOBIR1 as an adapter protein. In Arabidopsis thaliana (Mouse-ear cress), this protein is Receptor-like protein 1.